We begin with the raw amino-acid sequence, 333 residues long: Fructose-1,6-bisphosphatase class 1 1 (333 aa).

The Mg(2+) site is built by Glu-81, Asp-100, Leu-102, and Asp-103. Substrate is bound by residues 103 to 106 (DGSS) and Asn-191. Glu-263 lines the Mg(2+) pocket.

Belongs to the FBPase class 1 family. Homotetramer. The cofactor is Mg(2+).

Its subcellular location is the cytoplasm. The catalysed reaction is beta-D-fructose 1,6-bisphosphate + H2O = beta-D-fructose 6-phosphate + phosphate. The protein operates within carbohydrate biosynthesis; Calvin cycle. The polypeptide is Fructose-1,6-bisphosphatase class 1 1 (Cereibacter sphaeroides (strain ATCC 17029 / ATH 2.4.9) (Rhodobacter sphaeroides)).